A 307-amino-acid chain; its full sequence is Acetaldehyde dehydrogenase (307 aa).

12 to 15 (SGNI) contacts NAD(+). Catalysis depends on cysteine 130, which acts as the Acyl-thioester intermediate. NAD(+) contacts are provided by residues 161–169 (SVGPGTRQN) and asparagine 272.

Belongs to the acetaldehyde dehydrogenase family.

The catalysed reaction is acetaldehyde + NAD(+) + CoA = acetyl-CoA + NADH + H(+). This is Acetaldehyde dehydrogenase from Shewanella halifaxensis (strain HAW-EB4).